A 1392-amino-acid polypeptide reads, in one-letter code: Protein dispatched homolog 3 (1392 aa).

The Cytoplasmic segment spans residues 1 to 73; sequence MDTEDDPLLQ…LGWAFTNPCC (73 aa). The segment at 16–40 is disordered; sequence EEQEEEEATGETFLGAQKPGPQPGA. The helical transmembrane segment at 74–94 threads the bilayer; it reads AGLVLFLGCSIPMALSAFMFL. Topologically, residues 95–462 are lumenal; sequence YYPPLDIDIS…YEVRRTFNND (368 aa). The segment at 162–248 is disordered; that stretch reads GNRSRQASRA…HAAVAANQSR (87 aa). Asparagine 163 carries N-linked (GlcNAc...) asparagine glycosylation. Residues 190 to 199 show a composition bias toward polar residues; that stretch reads SAAQKPTANR. The region spanning 457–615 is the SSD domain; it reads RTFNNDMLLA…LVTMPAALGL (159 aa). The helical transmembrane segment at 463–483 threads the bilayer; that stretch reads MLLAFISSSCIAALVYILTSC. Residue serine 484 is a topological domain, cytoplasmic. Residues 485–505 traverse the membrane as a helical segment; that stretch reads VFLSFFGIASIGLSCLVALFL. The Lumenal segment spans residues 506–508; it reads YHV. Residues 509–529 traverse the membrane as a helical segment; the sequence is VFGIQYLGILNGVAAFVIVGI. Residues 530–573 lie on the Cytoplasmic side of the membrane; sequence GVDDVFVFINTYRQATHLEDPQLRMIHTVQTAGKATFFTSLTTA. Residues 574–594 form a helical membrane-spanning segment; sequence AAYAANVFSQIPAVHDFGLFM. A topological domain (lumenal) is located at residue serine 595. The chain crosses the membrane as a helical span at residues 596–616; sequence LIVSCCWLAVLVTMPAALGLW. At 617–729 the chain is on the cytoplasmic side; the sequence is SLYLAPLESS…WVLWSAVKSR (113 aa). The helical transmembrane segment at 730–750 threads the bilayer; the sequence is WVIVGLFVSILILSLVFASRL. Residues 751-1182 lie on the Lumenal side of the membrane; sequence RPASRAPLLF…IFMEIVGVQS (432 aa). Residue asparagine 1021 is glycosylated (N-linked (GlcNAc...) asparagine). Residues 1183–1203 traverse the membrane as a helical segment; that stretch reads ALCGLVLSLLICVAAVAVFTT. A topological domain (cytoplasmic) is located at residue histidine 1204. Residues 1205 to 1225 form a helical membrane-spanning segment; the sequence is ILLLLPVLLSILGIVCLVVTI. Topologically, residues 1226 to 1291 are lumenal; that stretch reads MYWSGWEMGA…TLEAVRHVGV (66 aa). Residues 1292 to 1312 traverse the membrane as a helical segment; it reads AIVSSALTTVIATVPLFFCII. Topologically, residues 1313 to 1320 are cytoplasmic; sequence APFAKFGK. A helical membrane pass occupies residues 1321–1341; it reads IVALNTGVSILYTLTVSTALL. The Lumenal segment spans residues 1342-1358; sequence GIMAPSSFTRTRTSFLK. The chain crosses the membrane as a helical span at residues 1359–1379; sequence ALGAVLLAGALGLGACLVLLQ. Topologically, residues 1380–1392 are cytoplasmic; sequence SGYKIPLPAGASL.

It belongs to the patched family. Expressed in brain and testis.

It localises to the endoplasmic reticulum membrane. The protein resides in the nucleus membrane. The protein localises to the cytoplasmic vesicle membrane. Plays a role in neuronal proliferation and differentiation. Plays a role in the accumulation of cellular cholesterol. Involved in intracellular lipid droplet formation. May contribute to cholesterol homeostasis in neuronal cells. This chain is Protein dispatched homolog 3, found in Homo sapiens (Human).